The following is a 416-amino-acid chain: Serine hydroxymethyltransferase (416 aa).

(6S)-5,6,7,8-tetrahydrofolate is bound by residues Leu-121 and 125–127; that span reads GHL. Lys-229 carries the post-translational modification N6-(pyridoxal phosphate)lysine.

Belongs to the SHMT family. Homodimer. Requires pyridoxal 5'-phosphate as cofactor.

The protein localises to the cytoplasm. It catalyses the reaction (6R)-5,10-methylene-5,6,7,8-tetrahydrofolate + glycine + H2O = (6S)-5,6,7,8-tetrahydrofolate + L-serine. It participates in one-carbon metabolism; tetrahydrofolate interconversion. Its pathway is amino-acid biosynthesis; glycine biosynthesis; glycine from L-serine: step 1/1. Catalyzes the reversible interconversion of serine and glycine with tetrahydrofolate (THF) serving as the one-carbon carrier. This reaction serves as the major source of one-carbon groups required for the biosynthesis of purines, thymidylate, methionine, and other important biomolecules. Also exhibits THF-independent aldolase activity toward beta-hydroxyamino acids, producing glycine and aldehydes, via a retro-aldol mechanism. The sequence is that of Serine hydroxymethyltransferase from Neisseria gonorrhoeae (strain NCCP11945).